The primary structure comprises 246 residues: 1-(5-phosphoribosyl)-5-[(5-phosphoribosylamino)methylideneamino] imidazole-4-carboxamide isomerase (246 aa).

Residue aspartate 8 is the Proton acceptor of the active site. Aspartate 131 acts as the Proton donor in catalysis.

This sequence belongs to the HisA/HisF family.

The protein localises to the cytoplasm. It carries out the reaction 1-(5-phospho-beta-D-ribosyl)-5-[(5-phospho-beta-D-ribosylamino)methylideneamino]imidazole-4-carboxamide = 5-[(5-phospho-1-deoxy-D-ribulos-1-ylimino)methylamino]-1-(5-phospho-beta-D-ribosyl)imidazole-4-carboxamide. The protein operates within amino-acid biosynthesis; L-histidine biosynthesis; L-histidine from 5-phospho-alpha-D-ribose 1-diphosphate: step 4/9. In Bordetella avium (strain 197N), this protein is 1-(5-phosphoribosyl)-5-[(5-phosphoribosylamino)methylideneamino] imidazole-4-carboxamide isomerase.